The primary structure comprises 145 residues: Acidic phospholipase A2 1 (145 aa).

The signal sequence occupies residues 1-21; the sequence is MYPAHLLVLLAVCVSLLGATA. The propeptide occupies 22–27; that stretch reads IPPLPL. 7 cysteine pairs are disulfide-bonded: cysteine 38–cysteine 98, cysteine 54–cysteine 144, cysteine 56–cysteine 72, cysteine 71–cysteine 125, cysteine 78–cysteine 118, cysteine 87–cysteine 111, and cysteine 105–cysteine 116. Ca(2+)-binding residues include tyrosine 55, glycine 57, and glycine 59. Residue histidine 75 is part of the active site. Aspartate 76 lines the Ca(2+) pocket. The active site involves aspartate 119.

It belongs to the phospholipase A2 family. Group I subfamily. D49 sub-subfamily. In terms of assembly, monomer. Requires Ca(2+) as cofactor. Expressed by the venom gland.

It localises to the secreted. It carries out the reaction a 1,2-diacyl-sn-glycero-3-phosphocholine + H2O = a 1-acyl-sn-glycero-3-phosphocholine + a fatty acid + H(+). PLA2 catalyzes the calcium-dependent hydrolysis of the 2-acyl groups in 3-sn-phosphoglycerides. The sequence is that of Acidic phospholipase A2 1 from Laticauda semifasciata (Black-banded sea krait).